We begin with the raw amino-acid sequence, 675 residues long: PTS system glucose-specific EIICBA component (675 aa).

One can recognise a PTS EIIC type-1 domain in the interval 3–414 (KKFFGQLQRI…FNFKTPGRED (412 aa)). The next 11 helical transmembrane spans lie at 16 to 36 (LMLP…GNAF), 63 to 83 (AGGI…AIGL), 89 to 109 (VAAI…GMFL), 126 to 146 (VLGI…GALA), 170 to 190 (FVPI…AIIW), 199 to 219 (AFSE…FGFI), 273 to 293 (FMQG…LAIY), 303 to 323 (VVAG…ITEP), 329 to 349 (LFVA…SFLI), 355 to 375 (LHLG…GILP), and 383 to 403 (VIPV…FLIV). The PTS EIIB type-1 domain occupies 425-506 (SELPFKVLDA…QQIMDGKITS (82 aa)). Cys-447 serves as the catalytic Phosphocysteine intermediate; for EIIB activity. The 105-residue stretch at 547–651 (DKVFSEKMMG…STITPIVVTN (105 aa)) folds into the PTS EIIA type-1 domain. His-599 (tele-phosphohistidine intermediate; for EIIA activity) is an active-site residue.

The protein localises to the cell membrane. It catalyses the reaction N(pros)-phospho-L-histidyl-[protein] + D-glucose(out) = D-glucose 6-phosphate(in) + L-histidyl-[protein]. With respect to regulation, inhibited by 2-deoxyglucose and methyl beta-D-glucoside, but not by methyl alpha-D-glucoside, p-nitrophenyl alpha-D-glucoside, o-nitrophenyl beta-D-glucoside and salicin. The phosphoenolpyruvate-dependent sugar phosphotransferase system (sugar PTS), a major carbohydrate active transport system, catalyzes the phosphorylation of incoming sugar substrates concomitantly with their translocation across the cell membrane. This system is involved in glucose transport. Cannot transport galactose, fructose, mannose, cellobiose, sucrose, maltose, lactose, melibiose and trehalose, as well as N-acetylglucosamine. The chain is PTS system glucose-specific EIICBA component (ptsG) from Staphylococcus carnosus (strain TM300).